A 416-amino-acid chain; its full sequence is Chromate transport protein (416 aa).

The disordered stretch occupies residues 1–21; sequence MSVANEESYRPSKATDATTEA. 11 helical membrane-spanning segments follow: residues 99 to 119, 128 to 148, 160 to 177, 181 to 198, 204 to 224, 237 to 257, 283 to 303, 308 to 328, 341 to 361, 371 to 391, and 395 to 415; these read LGGV…MFAL, FVGT…IALI, LLDR…LAAI, DFWI…LLVL, ALLV…WAAP, ASVL…FGGA, LALS…VGYV, IGAV…SLIF, LHAF…ATTI, VPSL…LYAW, and LNVV…FPNQ.

Belongs to the chromate ion transporter (CHR) (TC 2.A.51) family.

The protein resides in the cell inner membrane. Its function is as follows. This protein reduces chromate accumulation and is essential for chromate resistance. The polypeptide is Chromate transport protein (Pseudomonas aeruginosa).